Here is a 565-residue protein sequence, read N- to C-terminus: Ubiquitin carboxyl-terminal hydrolase 21 (565 aa).

Residues 1 to 14 show a composition bias toward basic and acidic residues; it reads MPQASEHRLGRTRE. Residues 1-103 form a disordered region; the sequence is MPQASEHRLG…PPPTVALPLP (103 aa). Pro residues predominate over residues 48-57; sequence MLRPLPPRPG. Over residues 58 to 70 the composition is skewed to basic and acidic residues; that stretch reads LPDERLKKLELGR. The short motif at 134–152 is the Nuclear export signal element; it reads ELGAALSRLALRPEPPTLR. The USP domain maps to 212–558; it reads VGLRNLGNTC…EGYVLFYQLM (347 aa). Cys221 functions as the Nucleophile in the catalytic mechanism. Cys384, Cys387, Cys437, and Cys440 together coordinate Zn(2+). His518 functions as the Proton acceptor in the catalytic mechanism.

Belongs to the peptidase C19 family. USP21 subfamily. Interacts with BEND3. Highly expressed in heart, pancreas and skeletal muscle. Also expressed in brain, placenta, liver and kidney, and at very low level in lung.

It is found in the cytoplasm. The protein localises to the nucleus. The catalysed reaction is Thiol-dependent hydrolysis of ester, thioester, amide, peptide and isopeptide bonds formed by the C-terminal Gly of ubiquitin (a 76-residue protein attached to proteins as an intracellular targeting signal).. In terms of biological role, deubiquitinates histone H2A, a specific tag for epigenetic transcriptional repression, thereby acting as a coactivator. Deubiquitination of histone H2A releaves the repression of di- and trimethylation of histone H3 at 'Lys-4', resulting in regulation of transcriptional initiation. Regulates gene expression via histone H2A deubiquitination. Deubiquitinates BAZ2A/TIP5 leading to its stabilization. Also capable of removing NEDD8 from NEDD8 conjugates but has no effect on Sentrin-1 conjugates. Also acts as a negative regulator of the ribosome quality control (RQC) by mediating deubiquitination of 40S ribosomal proteins RPS10/eS10 and RPS20/uS10, thereby antagonizing ZNF598-mediated 40S ubiquitination. The chain is Ubiquitin carboxyl-terminal hydrolase 21 from Homo sapiens (Human).